The chain runs to 728 residues: Phosphoribosylformylglycinamidine synthase subunit PurL (728 aa).

Residue H42 is part of the active site. ATP-binding residues include Y45 and K84. A Mg(2+)-binding site is contributed by E86. Substrate-binding positions include 87 to 90 (SHNH) and R109. H88 acts as the Proton acceptor in catalysis. Position 110 (D110) interacts with Mg(2+). Substrate is bound at residue Q237. D265 lines the Mg(2+) pocket. Residue 309–311 (ESQ) participates in substrate binding. 2 residues coordinate ATP: D491 and G528. N529 serves as a coordination point for Mg(2+). S531 provides a ligand contact to substrate.

This sequence belongs to the FGAMS family. As to quaternary structure, monomer. Part of the FGAM synthase complex composed of 1 PurL, 1 PurQ and 2 PurS subunits.

It localises to the cytoplasm. The catalysed reaction is N(2)-formyl-N(1)-(5-phospho-beta-D-ribosyl)glycinamide + L-glutamine + ATP + H2O = 2-formamido-N(1)-(5-O-phospho-beta-D-ribosyl)acetamidine + L-glutamate + ADP + phosphate + H(+). Its pathway is purine metabolism; IMP biosynthesis via de novo pathway; 5-amino-1-(5-phospho-D-ribosyl)imidazole from N(2)-formyl-N(1)-(5-phospho-D-ribosyl)glycinamide: step 1/2. Functionally, part of the phosphoribosylformylglycinamidine synthase complex involved in the purines biosynthetic pathway. Catalyzes the ATP-dependent conversion of formylglycinamide ribonucleotide (FGAR) and glutamine to yield formylglycinamidine ribonucleotide (FGAM) and glutamate. The FGAM synthase complex is composed of three subunits. PurQ produces an ammonia molecule by converting glutamine to glutamate. PurL transfers the ammonia molecule to FGAR to form FGAM in an ATP-dependent manner. PurS interacts with PurQ and PurL and is thought to assist in the transfer of the ammonia molecule from PurQ to PurL. In Campylobacter jejuni subsp. jejuni serotype O:6 (strain 81116 / NCTC 11828), this protein is Phosphoribosylformylglycinamidine synthase subunit PurL.